Reading from the N-terminus, the 180-residue chain is ATP-dependent protease subunit HslV (180 aa).

T9 is a catalytic residue. 3 residues coordinate Na(+): A164, C167, and T170.

It belongs to the peptidase T1B family. HslV subfamily. In terms of assembly, a double ring-shaped homohexamer of HslV is capped on each side by a ring-shaped HslU homohexamer. The assembly of the HslU/HslV complex is dependent on binding of ATP.

It localises to the cytoplasm. It carries out the reaction ATP-dependent cleavage of peptide bonds with broad specificity.. Allosterically activated by HslU binding. Its function is as follows. Protease subunit of a proteasome-like degradation complex believed to be a general protein degrading machinery. The sequence is that of ATP-dependent protease subunit HslV from Leptospira interrogans serogroup Icterohaemorrhagiae serovar Lai (strain 56601).